Here is a 32-residue protein sequence, read N- to C-terminus: Cytochrome c3, 10 kDa (32 aa).

Heme contacts are provided by histidine 16, cysteine 25, cysteine 28, and histidine 29.

Monomer. Binds 1 heme group per subunit.

It is found in the periplasm. In terms of biological role, participates in sulfate respiration coupled with phosphorylation by transferring electrons from the enzyme dehydrogenase to ferredoxin. This chain is Cytochrome c3, 10 kDa, found in Desulfuromonas acetoxidans (Chloropseudomonas ethylica).